A 206-amino-acid chain; its full sequence is Large ribosomal subunit protein uL13y (206 aa).

The protein belongs to the universal ribosomal protein uL13 family.

The protein is Large ribosomal subunit protein uL13y (RPL13AB) of Arabidopsis thaliana (Mouse-ear cress).